A 312-amino-acid chain; its full sequence is Cell division control protein 2 homolog D (312 aa).

Residues 14–304 (FVKLEKVGEG…AKKAMEHPYF (291 aa)) form the Protein kinase domain. Residues 20-28 (VGEGTYGKV) and Lys43 each bind ATP. Thr24 carries the post-translational modification Phosphothreonine. Position 25 is a phosphotyrosine (Tyr25). The active-site Proton acceptor is the Asp145. Thr179 carries the post-translational modification Phosphothreonine; by CAK.

The protein belongs to the protein kinase superfamily. CMGC Ser/Thr protein kinase family. CDC2/CDKX subfamily.

It carries out the reaction L-seryl-[protein] + ATP = O-phospho-L-seryl-[protein] + ADP + H(+). The enzyme catalyses L-threonyl-[protein] + ATP = O-phospho-L-threonyl-[protein] + ADP + H(+). The catalysed reaction is [DNA-directed RNA polymerase] + ATP = phospho-[DNA-directed RNA polymerase] + ADP + H(+). Its function is as follows. Plays a key role in the control of the eukaryotic cell cycle. This is Cell division control protein 2 homolog D (CDC2D) from Antirrhinum majus (Garden snapdragon).